The sequence spans 380 residues: Septin homolog spn6 (380 aa).

The Septin-type G domain occupies 27-297; that stretch reads KECGLTIMLC…ERYRREQLTN (271 aa). The segment at 37 to 44 is G1 motif; that stretch reads GASGTGKT. GTP is bound by residues 37-44, threonine 72, glycine 98, 177-185, and arginine 246; these read GASGTGKT and KADTFTTPE. Positions 95-98 are G3 motif; the sequence is DTPG. The interval 176-179 is G4 motif; the sequence is AKAD. A coiled-coil region spans residues 304–380; the sequence is KLKKEHYERL…KSYKGRGHKK (77 aa).

Belongs to the TRAFAC class TrmE-Era-EngA-EngB-Septin-like GTPase superfamily. Septin GTPase family. In terms of assembly, component of the sporulation-specific septin complex composed of at least spn2, spn5, spn6 and spn7.

The protein localises to the cytoplasm. The protein resides in the forespore membrane. Septin-like protein involved in the correct orientation of forespore membrane extension during sporulation. This chain is Septin homolog spn6 (spn6), found in Schizosaccharomyces pombe (strain 972 / ATCC 24843) (Fission yeast).